A 175-amino-acid polypeptide reads, in one-letter code: Gamma-crystallin B (175 aa).

Beta/gamma crystallin 'Greek key' domains follow at residues 2 to 40 and 41 to 83; these read GKITFFEDRSFQGRCYECSSDCPNLQTYFSRCNSVRVDS and GCWM…CLIP. The interval 84–88 is connecting peptide; sequence QHSGT. 2 Beta/gamma crystallin 'Greek key' domains span residues 89–129 and 130–172; these read YRMR…NVME and GCWV…RRVM.

It belongs to the beta/gamma-crystallin family.

Crystallins are the dominant structural components of the vertebrate eye lens. In Mus musculus (Mouse), this protein is Gamma-crystallin B (Crygb).